The following is a 68-amino-acid chain: Large ribosomal subunit protein bL35 (68 aa).

This sequence belongs to the bacterial ribosomal protein bL35 family.

In Orientia tsutsugamushi (strain Ikeda) (Rickettsia tsutsugamushi), this protein is Large ribosomal subunit protein bL35.